A 502-amino-acid polypeptide reads, in one-letter code: Mannitol 2-dehydrogenase (502 aa).

Ile-37–Ala-48 is an NAD(+) binding site.

It belongs to the mannitol dehydrogenase family. As to quaternary structure, monomer.

The enzyme catalyses D-mannitol + NAD(+) = D-fructose + NADH + H(+). Functionally, catalyzes the NAD(H)-dependent interconversion of D-fructose and D-mannitol in the mannitol metabolic pathway. The polypeptide is Mannitol 2-dehydrogenase (Emericella nidulans (strain FGSC A4 / ATCC 38163 / CBS 112.46 / NRRL 194 / M139) (Aspergillus nidulans)).